Here is a 424-residue protein sequence, read N- to C-terminus: L-glutamine:2-deoxy-scyllo-inosose aminotransferase (424 aa).

At lysine 202 the chain carries N6-(pyridoxal phosphate)lysine.

This sequence belongs to the DegT/DnrJ/EryC1 family. L-glutamine:2-deoxy-scyllo-inosose/scyllo-inosose aminotransferase subfamily. Requires pyridoxal 5'-phosphate as cofactor.

It catalyses the reaction 2-deoxy-L-scyllo-inosose + L-glutamine = 2-deoxy-scyllo-inosamine + 2-oxoglutaramate. The catalysed reaction is 3-amino-2,3-dideoxy-scyllo-inosose + L-glutamine = 2-deoxystreptamine + 2-oxoglutaramate. The protein operates within metabolic intermediate biosynthesis; 2-deoxystreptamine biosynthesis; 2-deoxystreptamine from D-glucose 6-phosphate: step 2/4. Its pathway is antibiotic biosynthesis; tobramycin biosynthesis. Its function is as follows. Catalyzes the PLP-dependent transamination of 2-deoxy-scyllo-inosose (2-DOI) to form 2-deoxy-scyllo-inosamine (2-DOIA) using L-glutamine as the amino donor. Also catalyzes the transamination of 3-amino-2,3-dideoxy-scyllo-inosose (keto-2-DOIA) into 2-deoxystreptamine (2-DOS). The protein is L-glutamine:2-deoxy-scyllo-inosose aminotransferase (tbmB) of Streptoalloteichus tenebrarius (strain ATCC 17920 / DSM 40477 / JCM 4838 / CBS 697.72 / NBRC 16177 / NCIMB 11028 / NRRL B-12390 / A12253. 1 / ISP 5477) (Streptomyces tenebrarius).